The primary structure comprises 317 residues: MTARHFLLDTDLTSSEQAALLDLADQLKATRRDRKPARRPLEGRSVALIFEKPSTRTRLSFDVAVAELGGHPIVIDSGSSQLGRGETIEDTAAVLSRYVDAIVIRTFAQDRVDRMAAAATVPVINALSDHTHPCQALADLQTIREIRGRLAGVTLAYLGDGNNVAHSLLLAGALAGLRVHVASPPGYEPIEQVVRHANEIGAVTGGEALVTHDALEAAAGADVLYTDVWASMGQDTESDSRALVFQPYRLDEKVVEAASPDAIVMHCLPAHREMEISAAVLDGPRSVVFDQAENRLHAQKALLSFLLDETTAGVGSR.

Carbamoyl phosphate is bound by residues 54–57, Gln81, Arg105, and 132–135; these read STRT and HPCQ. Residues Asn163, Asp227, and 231–232 contribute to the L-ornithine site; that span reads SM. Residues 267–268 and Arg295 contribute to the carbamoyl phosphate site; that span reads CL.

Belongs to the aspartate/ornithine carbamoyltransferase superfamily. OTCase family.

It is found in the cytoplasm. The catalysed reaction is carbamoyl phosphate + L-ornithine = L-citrulline + phosphate + H(+). Its pathway is amino-acid biosynthesis; L-arginine biosynthesis; L-arginine from L-ornithine and carbamoyl phosphate: step 1/3. Reversibly catalyzes the transfer of the carbamoyl group from carbamoyl phosphate (CP) to the N(epsilon) atom of ornithine (ORN) to produce L-citrulline. The polypeptide is Ornithine carbamoyltransferase (Parafrankia sp. (strain EAN1pec)).